The following is a 246-amino-acid chain: UDP-N-acetyl-D-mannosaminuronic acid transferase (246 aa).

Belongs to the glycosyltransferase 26 family.

The catalysed reaction is UDP-N-acetyl-alpha-D-mannosaminouronate + N-acetyl-alpha-D-glucosaminyl-di-trans,octa-cis-undecaprenyl diphosphate = beta-D-ManNAcA-(1-&gt;4)-alpha-D-GlcNAc-di-trans,octa-cis-undecaprenyl diphosphate + UDP + H(+). The protein operates within bacterial outer membrane biogenesis; enterobacterial common antigen biosynthesis. In terms of biological role, catalyzes the synthesis of Und-PP-GlcNAc-ManNAcA (Lipid II), the second lipid-linked intermediate involved in enterobacterial common antigen (ECA) synthesis. The protein is UDP-N-acetyl-D-mannosaminuronic acid transferase of Citrobacter koseri (strain ATCC BAA-895 / CDC 4225-83 / SGSC4696).